A 118-amino-acid chain; its full sequence is Small ribosomal subunit protein uS13 (118 aa).

A disordered region spans residues 94 to 118 (GLPVHGQRTKTNARTRKGPAKSITR).

The protein belongs to the universal ribosomal protein uS13 family. Part of the 30S ribosomal subunit. Forms a loose heterodimer with protein S19. Forms two bridges to the 50S subunit in the 70S ribosome.

Located at the top of the head of the 30S subunit, it contacts several helices of the 16S rRNA. In the 70S ribosome it contacts the 23S rRNA (bridge B1a) and protein L5 of the 50S subunit (bridge B1b), connecting the 2 subunits; these bridges are implicated in subunit movement. Contacts the tRNAs in the A and P-sites. The sequence is that of Small ribosomal subunit protein uS13 from Acidithiobacillus ferrooxidans (strain ATCC 23270 / DSM 14882 / CIP 104768 / NCIMB 8455) (Ferrobacillus ferrooxidans (strain ATCC 23270)).